The chain runs to 80 residues: Acyl carrier protein (80 aa).

The 76-residue stretch at 4–79 folds into the Carrier domain; sequence EAILEKVRSI…DAVKYIEEKQ (76 aa). Residue Ser-39 is modified to O-(pantetheine 4'-phosphoryl)serine.

The protein belongs to the acyl carrier protein (ACP) family. In terms of processing, 4'-phosphopantetheine is transferred from CoA to a specific serine of apo-ACP by AcpS. This modification is essential for activity because fatty acids are bound in thioester linkage to the sulfhydryl of the prosthetic group.

It localises to the cytoplasm. The protein operates within lipid metabolism; fatty acid biosynthesis. In terms of biological role, carrier of the growing fatty acid chain in fatty acid biosynthesis. In Prochlorococcus marinus (strain NATL1A), this protein is Acyl carrier protein.